We begin with the raw amino-acid sequence, 635 residues long: MAADAPGDRMEEPLPDRAVPIYVAGFLALYDSGDSGELALDPDTVRAALPPDNPLPINVDHRAGCEVGRVLAVVDDPRGPFFVGLIACVQLERVLETAASAAIFERRGPPLSREERLLYLITNYLPSVSLATKRLGGEAHPDRTLFAHVALCAIGRRLGTIVTYDTGLDAAIAPFRHLSPASREGARRLAAEAELALSGRTWAPGVEALTHTLLSTAVNNMMLRDRWSLVAERRRQAGIAGHTYLQASEKFKMWGAEPVSAPARGYKNGAPESTDIPPGSIAAAPQGDRCPIVRQRGVALSPVLPPMNPVPTSGTPAPAPPGDGSYLWIPASHYNQLVAGHAAPQPQPHSAFGFPAAAGSVAYGPHGAGLSQHYPPHVAHQYPGVLFSGPSPLEAQIAALVGAIAADRQAGGQPAAGDPGVRGSGKRRRYEAGPSESYCDQDEPDADYPYYPGEARGAPRGVDSRRAARHSPGTNETITALMGAVTSLQQELAHMRARTSAPYGMYTPVAHYRPQVGEPEPTTTHPALCPPEAVYRPPPHSAPYGPPQGPASHAPTPPYAPAACPPGPPPPPCPSTQTRAPLPTEPAFPPAATGSQPEASNAEAGALVNASSAAHVDVDTARAADLFVSQMMGAR.

Residues histidine 61, serine 129, and histidine 148 each act as charge relay system in the active site. Residues 324-343 are interaction with pAP; sequence GSYLWIPASHYNQLVAGHAA. A compositionally biased stretch (low complexity) spans 409–419; that stretch reads QAGGQPAAGDP. 2 disordered regions span residues 409–476 and 514–606; these read QAGG…GTNE and PQVG…EAGA. Residues 426–429 carry the Nuclear localization signal motif; the sequence is KRRR. Positions 536–574 are enriched in pro residues; that stretch reads RPPPHSAPYGPPQGPASHAPTPPYAPAACPPGPPPPPCP. The segment at 615–635 is interaction with major capsid protein; the sequence is HVDVDTARAADLFVSQMMGAR.

This sequence belongs to the herpesviridae capsid scaffolding protein family. As to quaternary structure, homomultimer. Interacts with major capsid protein. Exists in a monomer-dimer equilibrium with the dimer being the active species. In terms of processing, capsid scaffolding protein is cleaved by assemblin after formation of the spherical procapsid. As a result, the capsid obtains its mature, icosahedral shape. Cleavages occur at two or more sites: release (R-site) and maturation (M-site).

It is found in the host cytoplasm. The protein resides in the host nucleus. It carries out the reaction Cleaves -Ala-|-Ser- and -Ala-|-Ala- bonds in the scaffold protein.. Functionally, acts as a scaffold protein by binding major capsid protein in the cytoplasm, inducing the nuclear localization of both proteins. Multimerizes in the nucleus such as major capsid protein forms the icosahedral T=16 capsid. Autocatalytic cleavage releases the assembly protein, and subsequently abolishes interaction with major capsid protein. Cleavages products are evicted from the capsid before or during DNA packaging. In terms of biological role, protease that plays an essential role in virion assembly within the nucleus. Catalyzes the cleavage of the assembly protein after formation of the spherical procapsid. By that cleavage, the capsid matures and gains its icosahedral shape. The cleavage sites seem to include -Ala-Ser-, -Ala-Ala-, as well as Ala-Thr bonds. Assemblin and cleavages products are evicted from the capsid before or during DNA packaging. Its function is as follows. Plays a major role in capsid assembly. Acts as a scaffold protein by binding major capsid protein. Multimerizes in the nucleus such as major capsid protein forms the icosahedral T=16 capsid. Cleaved by assemblin after capsid completion. The cleavages products are evicted from the capsid before or during DNA packaging. This Human herpesvirus 1 (strain 17) (HHV-1) protein is Capsid scaffolding protein (UL26).